Here is a 256-residue protein sequence, read N- to C-terminus: Enolase-phosphatase E1 (256 aa).

Mg(2+) is bound by residues Asp-14 and Glu-16. Substrate is bound by residues 142 to 143 (SS) and Lys-176. Asp-201 provides a ligand contact to Mg(2+).

This sequence belongs to the HAD-like hydrolase superfamily. MasA/MtnC family. Monomer. The cofactor is Mg(2+).

The protein resides in the cytoplasm. It is found in the nucleus. It catalyses the reaction 5-methylsulfanyl-2,3-dioxopentyl phosphate + H2O = 1,2-dihydroxy-5-(methylsulfanyl)pent-1-en-3-one + phosphate. The protein operates within amino-acid biosynthesis; L-methionine biosynthesis via salvage pathway; L-methionine from S-methyl-5-thio-alpha-D-ribose 1-phosphate: step 3/6. It participates in amino-acid biosynthesis; L-methionine biosynthesis via salvage pathway; L-methionine from S-methyl-5-thio-alpha-D-ribose 1-phosphate: step 4/6. In terms of biological role, bifunctional enzyme that catalyzes the enolization of 2,3-diketo-5-methylthiopentyl-1-phosphate (DK-MTP-1-P) into the intermediate 2-hydroxy-3-keto-5-methylthiopentenyl-1-phosphate (HK-MTPenyl-1-P), which is then dephosphorylated to form the acireductone 1,2-dihydroxy-3-keto-5-methylthiopentene (DHK-MTPene). The protein is Enolase-phosphatase E1 of Drosophila sechellia (Fruit fly).